Here is a 507-residue protein sequence, read N- to C-terminus: Histidine ammonia-lyase (507 aa).

Residues 141-143 (ASG) constitute a cross-link (5-imidazolinone (Ala-Gly)). The residue at position 142 (serine 142) is a 2,3-didehydroalanine (Ser).

It belongs to the PAL/histidase family. In terms of processing, contains an active site 4-methylidene-imidazol-5-one (MIO), which is formed autocatalytically by cyclization and dehydration of residues Ala-Ser-Gly.

It localises to the cytoplasm. It catalyses the reaction L-histidine = trans-urocanate + NH4(+). Its pathway is amino-acid degradation; L-histidine degradation into L-glutamate; N-formimidoyl-L-glutamate from L-histidine: step 1/3. This Burkholderia lata (strain ATCC 17760 / DSM 23089 / LMG 22485 / NCIMB 9086 / R18194 / 383) protein is Histidine ammonia-lyase.